The chain runs to 312 residues: Malate dehydrogenase (312 aa).

NAD(+)-binding positions include 12-17 (GAGFTG) and Asp-36. The substrate site is built by Arg-87 and Arg-93. NAD(+) contacts are provided by residues Asn-100 and 123 to 125 (LTN). Asn-125 provides a ligand contact to substrate. Phosphoserine is present on Ser-149. Residue Arg-156 coordinates substrate. His-180 (proton acceptor) is an active-site residue.

Belongs to the LDH/MDH superfamily. MDH type 3 family.

The catalysed reaction is (S)-malate + NAD(+) = oxaloacetate + NADH + H(+). Its function is as follows. Catalyzes the reversible oxidation of malate to oxaloacetate. The chain is Malate dehydrogenase from Bacillus licheniformis (strain ATCC 14580 / DSM 13 / JCM 2505 / CCUG 7422 / NBRC 12200 / NCIMB 9375 / NCTC 10341 / NRRL NRS-1264 / Gibson 46).